The chain runs to 357 residues: Protein-glutamate methylesterase/protein-glutamine glutaminase 1 (357 aa).

A Response regulatory domain is found at 7–125 (RAVIIDDSLL…QFDPEEIGNI (119 aa)). A 4-aspartylphosphate modification is found at Asp58. The CheB-type methylesterase domain occupies 162–344 (KKSPIQAICI…VEYIEPVTEI (183 aa)). Residues Ser174, His201, and Asp297 contribute to the active site.

The protein belongs to the CheB family. In terms of processing, phosphorylated by CheA. Phosphorylation of the N-terminal regulatory domain activates the methylesterase activity.

The protein localises to the cytoplasm. It carries out the reaction [protein]-L-glutamate 5-O-methyl ester + H2O = L-glutamyl-[protein] + methanol + H(+). The enzyme catalyses L-glutaminyl-[protein] + H2O = L-glutamyl-[protein] + NH4(+). Functionally, involved in chemotaxis. Part of a chemotaxis signal transduction system that modulates chemotaxis in response to various stimuli. Catalyzes the demethylation of specific methylglutamate residues introduced into the chemoreceptors (methyl-accepting chemotaxis proteins or MCP) by CheR. Also mediates the irreversible deamidation of specific glutamine residues to glutamic acid. This Leptospira interrogans serogroup Icterohaemorrhagiae serovar Lai (strain 56601) protein is Protein-glutamate methylesterase/protein-glutamine glutaminase 1.